We begin with the raw amino-acid sequence, 224 residues long: MIKLGNDWDELLKNEFNQPYYLTLRQFLKKEYQTKKVFPDMYDIFNALKHTAYKDVKVVILGQDPYHGPGQAHGLSFSVQQGVQIPPSLQNIYLELHNDLNCEIPNNGYLIPWADQGVLLLNTVLTVRAGQANSHRGQGWEILTNHIIEIINQKEEPVVFLLWGSNAKEKLQLLTNPKHTAFTSVHPSPLSASRGFMGCKHFSKTNQFLEQNGVKPIDWQIPSI.

Asp64 functions as the Proton acceptor in the catalytic mechanism.

Belongs to the uracil-DNA glycosylase (UDG) superfamily. UNG family.

The protein resides in the cytoplasm. The catalysed reaction is Hydrolyzes single-stranded DNA or mismatched double-stranded DNA and polynucleotides, releasing free uracil.. Functionally, excises uracil residues from the DNA which can arise as a result of misincorporation of dUMP residues by DNA polymerase or due to deamination of cytosine. This chain is Uracil-DNA glycosylase 2, found in Listeria monocytogenes serovar 1/2a (strain ATCC BAA-679 / EGD-e).